Consider the following 427-residue polypeptide: Imidazolonepropionase (427 aa).

Fe(3+)-binding residues include H78 and H80. Residues H78 and H80 each coordinate Zn(2+). Residues R87, Y150, and H183 each contribute to the 4-imidazolone-5-propanoate site. Position 150 (Y150) interacts with N-formimidoyl-L-glutamate. H255 lines the Fe(3+) pocket. A Zn(2+)-binding site is contributed by H255. E258 is a 4-imidazolone-5-propanoate binding site. Fe(3+) is bound at residue D330. D330 contacts Zn(2+). N-formimidoyl-L-glutamate contacts are provided by N332 and G334. T335 lines the 4-imidazolone-5-propanoate pocket.

The protein belongs to the metallo-dependent hydrolases superfamily. HutI family. Zn(2+) is required as a cofactor. Fe(3+) serves as cofactor.

Its subcellular location is the cytoplasm. The enzyme catalyses 4-imidazolone-5-propanoate + H2O = N-formimidoyl-L-glutamate. It participates in amino-acid degradation; L-histidine degradation into L-glutamate; N-formimidoyl-L-glutamate from L-histidine: step 3/3. Functionally, catalyzes the hydrolytic cleavage of the carbon-nitrogen bond in imidazolone-5-propanoate to yield N-formimidoyl-L-glutamate. It is the third step in the universal histidine degradation pathway. This chain is Imidazolonepropionase, found in Herpetosiphon aurantiacus (strain ATCC 23779 / DSM 785 / 114-95).